Reading from the N-terminus, the 153-residue chain is NAD(P)H-quinone oxidoreductase subunit N (153 aa).

This sequence belongs to the complex I NdhN subunit family. NDH-1 can be composed of about 15 different subunits; different subcomplexes with different compositions have been identified which probably have different functions.

It localises to the cellular thylakoid membrane. It carries out the reaction a plastoquinone + NADH + (n+1) H(+)(in) = a plastoquinol + NAD(+) + n H(+)(out). It catalyses the reaction a plastoquinone + NADPH + (n+1) H(+)(in) = a plastoquinol + NADP(+) + n H(+)(out). NDH-1 shuttles electrons from an unknown electron donor, via FMN and iron-sulfur (Fe-S) centers, to quinones in the respiratory and/or the photosynthetic chain. The immediate electron acceptor for the enzyme in this species is believed to be plastoquinone. Couples the redox reaction to proton translocation, and thus conserves the redox energy in a proton gradient. Cyanobacterial NDH-1 also plays a role in inorganic carbon-concentration. The polypeptide is NAD(P)H-quinone oxidoreductase subunit N (Synechococcus sp. (strain CC9311)).